Here is a 63-residue protein sequence, read N- to C-terminus: Large ribosomal subunit protein bL32 (63 aa).

Belongs to the bacterial ribosomal protein bL32 family.

The protein is Large ribosomal subunit protein bL32 of Acholeplasma laidlawii.